We begin with the raw amino-acid sequence, 213 residues long: UPF0111 protein TM_0914 (213 aa).

It belongs to the UPF0111 family.

This chain is UPF0111 protein TM_0914, found in Thermotoga maritima (strain ATCC 43589 / DSM 3109 / JCM 10099 / NBRC 100826 / MSB8).